Consider the following 715-residue polypeptide: Polyribonucleotide nucleotidyltransferase (715 aa).

Residues Asp485 and Asp491 each coordinate Mg(2+). In terms of domain architecture, KH spans 552–611 (PRIHTMKIDPKKIKDVIGKGGAVIRALTEETGTSIDIDDDGTVKIAATDNNAAKAVMARI). The S1 motif domain maps to 621–689 (NAIYKGKVTR…RQNRIRLTMK (69 aa)). Residues 695–715 (TPVAENVTEEAEVSSEQQAEI) form a disordered region.

It belongs to the polyribonucleotide nucleotidyltransferase family. As to quaternary structure, component of the RNA degradosome, which is a multiprotein complex involved in RNA processing and mRNA degradation. The cofactor is Mg(2+).

It is found in the cytoplasm. The catalysed reaction is RNA(n+1) + phosphate = RNA(n) + a ribonucleoside 5'-diphosphate. Its function is as follows. Involved in mRNA degradation. Catalyzes the phosphorolysis of single-stranded polyribonucleotides processively in the 3'- to 5'-direction. In Actinobacillus pleuropneumoniae serotype 3 (strain JL03), this protein is Polyribonucleotide nucleotidyltransferase.